The following is a 352-amino-acid chain: Histidine biosynthesis bifunctional protein HisB (352 aa).

The interval Met1–Phe164 is histidinol-phosphatase. Asp9 serves as the catalytic Nucleophile. Residues Asp9 and Asp11 each contribute to the Mg(2+) site. The active-site Proton donor is Asp11. Cys93, His95, Cys101, and Cys103 together coordinate Zn(2+). Asp130 serves as a coordination point for Mg(2+). The segment at Arg165 to Ile352 is imidazoleglycerol-phosphate dehydratase.

This sequence in the N-terminal section; belongs to the histidinol-phosphatase family. In the C-terminal section; belongs to the imidazoleglycerol-phosphate dehydratase family. Mg(2+) serves as cofactor. Requires Zn(2+) as cofactor.

It localises to the cytoplasm. It catalyses the reaction D-erythro-1-(imidazol-4-yl)glycerol 3-phosphate = 3-(imidazol-4-yl)-2-oxopropyl phosphate + H2O. It carries out the reaction L-histidinol phosphate + H2O = L-histidinol + phosphate. It functions in the pathway amino-acid biosynthesis; L-histidine biosynthesis; L-histidine from 5-phospho-alpha-D-ribose 1-diphosphate: step 6/9. Its pathway is amino-acid biosynthesis; L-histidine biosynthesis; L-histidine from 5-phospho-alpha-D-ribose 1-diphosphate: step 8/9. This is Histidine biosynthesis bifunctional protein HisB from Campylobacter jejuni subsp. jejuni serotype O:2 (strain ATCC 700819 / NCTC 11168).